Reading from the N-terminus, the 458-residue chain is tRNA modification GTPase MnmE (458 aa).

(6S)-5-formyl-5,6,7,8-tetrahydrofolate contacts are provided by Arg22, Glu84, and Arg123. The region spanning 220-379 (GIATAIIGRP…LEKAIADLFF (160 aa)) is the TrmE-type G domain. Asn230 lines the K(+) pocket. GTP contacts are provided by residues 230–235 (NVGKSS), 249–255 (TDIAGTT), and 274–277 (DTAG). Ser234 is a Mg(2+) binding site. K(+) is bound by residues Thr249, Ile251, and Thr254. Thr255 contacts Mg(2+). (6S)-5-formyl-5,6,7,8-tetrahydrofolate is bound at residue Lys458.

The protein belongs to the TRAFAC class TrmE-Era-EngA-EngB-Septin-like GTPase superfamily. TrmE GTPase family. Homodimer. Heterotetramer of two MnmE and two MnmG subunits. K(+) is required as a cofactor.

The protein localises to the cytoplasm. Its function is as follows. Exhibits a very high intrinsic GTPase hydrolysis rate. Involved in the addition of a carboxymethylaminomethyl (cmnm) group at the wobble position (U34) of certain tRNAs, forming tRNA-cmnm(5)s(2)U34. This chain is tRNA modification GTPase MnmE, found in Bacillus cytotoxicus (strain DSM 22905 / CIP 110041 / 391-98 / NVH 391-98).